A 103-amino-acid polypeptide reads, in one-letter code: Small ribosomal subunit protein uS14c (103 aa).

The interval Lys34 to Asn56 is disordered.

It belongs to the universal ribosomal protein uS14 family. In terms of assembly, part of the 30S ribosomal subunit.

The protein resides in the plastid. The protein localises to the chloroplast. Functionally, binds 16S rRNA, required for the assembly of 30S particles. The protein is Small ribosomal subunit protein uS14c of Saccharum hybrid (Sugarcane).